The following is a 1237-amino-acid chain: MRSRSNSGVRLDSYARLVQQTILCHQNPVTGLLPASYDQKDAWVRDNVYSILAVWGLGLAYRKNADRDEDKAKAYELEQSVVKLMRGLLHCMIRQVDKVESFKYSQSTKDSLHAKYNTKTCATVVGDDQWGHLQLDATSVYLLFLAQMTASGLHIIHSLDEVNFIQNLVFYIEAAYKTADFGIWERGDKTNQGISELNASSVGMAKAALEALDELDLFGVKGGPQSVIHVLADEVQHCQSILNSLLPRASTSKEVDASLLSVISFPAFAVEDSKLVEITKQEIITKLQGRYGCCRFLRDGYKTPKEDPNRLYYEPAELKLFENIECEWPLFWTYFILDGVFSGNAEQVQEYREALEAVLIKGKNGVPLLPELYSVPPDKVDEEYQNPHTVDRVPMGKLPHMWGQSLYILGSLMAEGFLAPGEIDPLNRRFSTVPKPDVVVQVSILAETEEIKAILKDKGINVETIAEVYPIRVQPARILSHIYSSLGCNNRMKLSGRPYRHMGVLGTSKLYDIRKTIFTFTPQFIDQQQFYLALDNKMIVEMLRTDLSYLCSRWRMTGQPTITFPISQTMLDEDGTSLNSSILAALRKMQDGYFGGARIQTGKLSEFLTTSCCTHLSFMDPGPEGKLYSEDYDDNYDELESGDWMDGYNSTSTARCGDEVARYLDHLLAHTAPHPKLAPASQKGGLNRFRAAVQTTCDLMSLVTKAKELHVQNVHMYLPTKLFQASRPSLNLLDSSHPSQEDQVPTVRVEVHLPRDQSGEVDFQALVLQLKETSSLQEQADILYMLYTMKGPDWDTELYEEGSATVRELLTELYGKVGKIRHWGLIRYISGILRKKVEALDEACTDLLSHQKHLTVGLPPEPREKTISAPLPYEALTRLIEEACEGDMNISILTQEIMVYLAMYMRTQPGLFAEMFRLRIGLIIQVMATELAHSLRCSAEEATEGLMNLSPSAMKNLLHHILSGKEFGVERSVRPTDSNVSPAISIHEIGAVGATKTERTGIMQLKSEIKQVEFRRLSISTESQPNGGHSLGADLMSPSFLSPGTSVTPSSGSFPGHHTSKDSRQGQWQRRRRLDGALNRVPIGFYQKVWKVLQKCHGLSVEGFVLPSSTTREMTPGEIKFSVHVESVLNRVPQPEYRQLLVEAILVLTMLADIEIHSIGSIIAVEKIVHIANDLFLQEQKTLGADDIMLAKDPASGICTLLYDSAPSGRFGTMTYLSKAAATYVQEFLPHSICAMQ.

S629, S729, S735, and S758 each carry phosphoserine. Positions 810–840 (LTELYGKVGKIRHWGLIRYISGILRKKVEAL) are calmodulin-binding. S972 carries the post-translational modification Phosphoserine; by autocatalysis. A Phosphoserine modification is found at S981. S985 and S1007 each carry phosphoserine; by autocatalysis. S1018 is modified (phosphoserine; by PKA). 3 positions are modified to phosphoserine: S1020, S1023, and S1030. The interval 1021-1069 (TESQPNGGHSLGADLMSPSFLSPGTSVTPSSGSFPGHHTSKDSRQGQWQ) is disordered. A compositionally biased stretch (low complexity) spans 1042–1056 (SPGTSVTPSSGSFPG). Positions 1060-1100 (SKDSRQGQWQRRRRLDGALNRVPIGFYQKVWKVLQKCHGLS) are calmodulin-binding. Phosphoserine is present on S1127. C1234 carries S-farnesyl cysteine lipidation.

This sequence belongs to the phosphorylase b kinase regulatory chain family. In terms of assembly, hexadecamer of 4 heterotetramers, each composed of alpha, beta, gamma, and delta subunits. Alpha (PHKA1 or PHKA2) and beta (PHKB) are regulatory subunits, gamma (PHKG1 or PHKG2) is the catalytic subunit, and delta is calmodulin. In terms of processing, phosphorylation of Ser-1018 by PKA stimulates the dephosphorylation of the beta subunit and, thus, reverses the initial stimulation of PHK by the faster beta-subunit phosphorylation by PKA, that occurs in muscle in response to adrenaline. Cys-1234 is farnesylated, but the C-terminal tripeptide is not removed and the cysteine carboxyl is not methylated. In terms of tissue distribution, isoform 1 predominates in muscle, heart, brain and testis. Isoforms 1 and 2 are expressed in similar quantities in the other tissues. Isoform 3 is highly expressed in slow muscle and heart.

It localises to the cell membrane. It participates in glycan biosynthesis; glycogen metabolism. Its activity is regulated as follows. By phosphorylation of various serine residues and by calcium. Its function is as follows. Phosphorylase b kinase catalyzes the phosphorylation of serine in certain substrates, including troponin I. The alpha chain may bind calmodulin. This chain is Phosphorylase b kinase regulatory subunit alpha, skeletal muscle isoform (PHKA1), found in Oryctolagus cuniculus (Rabbit).